The sequence spans 239 residues: Ribonuclease P protein component 3 (239 aa).

The protein belongs to the eukaryotic/archaeal RNase P protein component 3 family. Consists of a catalytic RNA component and at least 4-5 protein subunits.

The protein localises to the cytoplasm. It carries out the reaction Endonucleolytic cleavage of RNA, removing 5'-extranucleotides from tRNA precursor.. Its function is as follows. Part of ribonuclease P, a protein complex that generates mature tRNA molecules by cleaving their 5'-ends. The protein is Ribonuclease P protein component 3 of Methanosarcina acetivorans (strain ATCC 35395 / DSM 2834 / JCM 12185 / C2A).